The primary structure comprises 231 residues: Cysteine-rich venom protein VAR10 (231 aa).

The N-terminal stretch at 1 to 19 (MILLKLYLTLAAILCQSRG) is a signal peptide. In terms of domain architecture, SCP spans 41–169 (NKHNDLRRTV…SLKYFQVCQY (129 aa)). Intrachain disulfides connect C77/C156, C95/C170, C151/C167, C189/C196, and C214/C231. The ShKT domain occupies 205 to 231 (CAYNDDYTSCPDLTKQVGCHHPVTANC).

It belongs to the CRISP family. In terms of processing, contains 8 disulfide bonds. Expressed by the venom gland.

It is found in the secreted. Its function is as follows. Blocks ryanodine receptors, and potassium channels. The chain is Cysteine-rich venom protein VAR10 from Varanus varius (Lace monitor lizard).